We begin with the raw amino-acid sequence, 337 residues long: Tetraacyldisaccharide 4'-kinase (337 aa).

55–62 (NAGGTGKT) is an ATP binding site.

Belongs to the LpxK family.

The enzyme catalyses a lipid A disaccharide + ATP = a lipid IVA + ADP + H(+). It participates in glycolipid biosynthesis; lipid IV(A) biosynthesis; lipid IV(A) from (3R)-3-hydroxytetradecanoyl-[acyl-carrier-protein] and UDP-N-acetyl-alpha-D-glucosamine: step 6/6. Transfers the gamma-phosphate of ATP to the 4'-position of a tetraacyldisaccharide 1-phosphate intermediate (termed DS-1-P) to form tetraacyldisaccharide 1,4'-bis-phosphate (lipid IVA). This chain is Tetraacyldisaccharide 4'-kinase, found in Dinoroseobacter shibae (strain DSM 16493 / NCIMB 14021 / DFL 12).